A 222-amino-acid chain; its full sequence is uncharacterized protein (222 aa).

Residues 8-77 form the HTH gntR-type domain; sequence AKKGQIIYRY…GNAGYFVAKN (70 aa).

This is an uncharacterized protein from Mycoplasma pneumoniae (strain ATCC 29342 / M129 / Subtype 1) (Mycoplasmoides pneumoniae).